An 83-amino-acid polypeptide reads, in one-letter code: Small ribosomal subunit protein bS16 (83 aa).

This sequence belongs to the bacterial ribosomal protein bS16 family.

The polypeptide is Small ribosomal subunit protein bS16 (Pseudoalteromonas atlantica (strain T6c / ATCC BAA-1087)).